Consider the following 839-residue polypeptide: V-type proton ATPase 116 kDa subunit a 1 (839 aa).

Topologically, residues 1–395 (MGELFRSEEM…DAYGIGTYRE (395 aa)) are cytoplasmic. Thr-257 and Thr-367 each carry phosphothreonine. Position 371 is a phosphotyrosine (Tyr-371). A helical transmembrane segment spans residues 396–414 (INPAPYTVITFPFLFAVMF). At 415–416 (GD) the chain is on the vacuolar side. The chain crosses the membrane as a helical span at residues 417–433 (FGHGILMTLFAVWMVLR). The Cytoplasmic portion of the chain corresponds to 434–448 (ESRILSQKHENEMFS). A helical transmembrane segment spans residues 449 to 478 (MVFSGRYIILLMGLFSIYTGLIYNDCFSKS). Over 479–542 (LNIFGSSWSV…ATNKLTFLNS (64 aa)) the chain is Vacuolar. A helical transmembrane segment spans residues 543-562 (FKMKMSVILGIIHMLFGVSL). The Cytoplasmic segment spans residues 563 to 580 (SLFNHIYFKKPLNIYFGF). Residues 581–601 (IPEIIFMSSLFGYLVILIFYK) form a helical membrane-spanning segment. Over 602 to 646 (WTAYDAHSSRNAPSLLIHFINMFLFSYPESGNAMLYSGQKGIQCF) the chain is Vacuolar. The helical transmembrane segment at 647–666 (LIVVAMLCVPWMLLFKPLIL) threads the bilayer. Residues 667 to 726 (RHQYLRKKHLGTLNFGGIRVGNGPTEEDAEIIQHDQLSTHSEDAEEFDFGDTMVHQAIHT) are Cytoplasmic-facing. Residues 727–751 (IEYCLGCISNTASYLRLWALSLAHA) form a helical membrane-spanning segment. Over 752–772 (QLSEVLWTMVIHIGLHVRSLA) the chain is Vacuolar. A helical transmembrane segment spans residues 773–811 (GGLGLFFIFAAFATLTVAILLIMEGLSAFLHALRLHWVE). The Cytoplasmic segment spans residues 812-839 (FQNKFYTGTGFKFLPFSFEHIREGKFDE).

This sequence belongs to the V-ATPase 116 kDa subunit family. V-ATPase is a heteromultimeric enzyme made up of two complexes: the ATP-hydrolytic V1 complex and the proton translocation V0 complex. The V1 complex consists of three catalytic AB heterodimers that form a heterohexamer, three peripheral stalks each consisting of EG heterodimers, one central rotor including subunits D and F, and the regulatory subunits C and H. The proton translocation complex V0 consists of the proton transport subunit a, a ring of proteolipid subunits c9c'', rotary subunit d, subunits e and f, and the accessory subunits ATP6AP1/Ac45 and ATP6AP2/PRR. Interacts with SPAAR. As to expression, predominantly expressed in neurons in the cortex and in the dentate gyrus, CA1 and CA3 regions of the hippocampus (at protein level). Expressed at lower levels in astrocytes, oligodendrocytes and microglia (at protein level). In the cerebellum, present in Purkinje and granule cells (at protein level).

It localises to the cytoplasmic vesicle. The protein localises to the clathrin-coated vesicle membrane. It is found in the secretory vesicle. Its subcellular location is the synaptic vesicle membrane. The protein resides in the melanosome. In terms of biological role, subunit of the V0 complex of vacuolar(H+)-ATPase (V-ATPase), a multisubunit enzyme composed of a peripheral complex (V1) that hydrolyzes ATP and a membrane integral complex (V0) that translocates protons. V-ATPase is responsible for the acidification of various organelles, such as lysosomes, endosomes, the trans-Golgi network, and secretory granules, including synaptic vesicles. In certain cell types, can be exported to the plasma membrane, where it is involved in the acidification of the extracellular environment. Required for assembly and activity of the vacuolar ATPase. Through its action on compartment acidification, plays an essential role in neuronal development in terms of integrity and connectivity of neurons. The chain is V-type proton ATPase 116 kDa subunit a 1 (Atp6v0a1) from Mus musculus (Mouse).